A 321-amino-acid polypeptide reads, in one-letter code: uncharacterized protein (321 aa).

Positions 1-12 are enriched in basic and acidic residues; it reads MQGGREVGRESV. Positions 1-85 are disordered; that stretch reads MQGGREVGRE…GWGEFEGFQE (85 aa). Polar residues predominate over residues 53-67; it reads NANSSRLDEGLSSSR.

This is an uncharacterized protein from Rattus norvegicus (Rat).